A 344-amino-acid polypeptide reads, in one-letter code: MVSMPNPILDAAAGVTPHRRPVWFMRQAGRSLPEYREIREGVSMLDSCFRPDMLAEITLQPVRRHDVDAAILFSDIVVPLKAAGVRVEIVPGRGPVMDHPLLTRQDIENLPILDHDVHEVAEGIGIIREELNDAQTLIGFAGAPFTLASYLVEGGPSKNHEKTKSLMHQDPESWHLLMRRLVPTIVQFLRTQIDAGVQAMQLFDSWAGFLSERDYREFVLPYSMEILAQVGDVPRIHFGVGTGELLTAMSEAGSEVVGVDWRVPLDVAAQRMVSPKVLQGNLDPAILFAGEDVMRREIARICAEADRAIAAGHATGHIFNLGHGVLPNTDPDAITRAVEIIHTF.

Residues 26–30 (RQAGR), D75, Y150, S205, and H323 contribute to the substrate site.

This sequence belongs to the uroporphyrinogen decarboxylase family. Homodimer.

Its subcellular location is the cytoplasm. It carries out the reaction uroporphyrinogen III + 4 H(+) = coproporphyrinogen III + 4 CO2. The protein operates within porphyrin-containing compound metabolism; protoporphyrin-IX biosynthesis; coproporphyrinogen-III from 5-aminolevulinate: step 4/4. Catalyzes the decarboxylation of four acetate groups of uroporphyrinogen-III to yield coproporphyrinogen-III. The polypeptide is Uroporphyrinogen decarboxylase (Corynebacterium diphtheriae (strain ATCC 700971 / NCTC 13129 / Biotype gravis)).